Consider the following 437-residue polypeptide: ATP-dependent RNA helicase RhlB (437 aa).

The Q motif motif lies at 9–37 (QKFADLGLKPQVTEGLEKKGFEYCTPIQA). The region spanning 40 to 219 (LPVLLTGQDI…FEHMHNPEHV (180 aa)) is the Helicase ATP-binding domain. An ATP-binding site is contributed by 53–60 (AQTGTGKT). Positions 165-168 (DEAD) match the DEAD box motif. Residues 245 to 390 (ALLQTLIEEE…VSDYDASALI (146 aa)) enclose the Helicase C-terminal domain. The interval 395-437 (APLRMRAPRTQQRRTNTGGTRSGNRKPQGRRPRQPRQSAPKQS) is disordered. A compositionally biased stretch (low complexity) spans 403-413 (RTQQRRTNTGG). The span at 417-428 (GNRKPQGRRPRQ) shows a compositional bias: basic residues.

This sequence belongs to the DEAD box helicase family. RhlB subfamily. In terms of assembly, component of the RNA degradosome, which is a multiprotein complex involved in RNA processing and mRNA degradation.

It is found in the cytoplasm. The catalysed reaction is ATP + H2O = ADP + phosphate + H(+). Its function is as follows. DEAD-box RNA helicase involved in RNA degradation. Has RNA-dependent ATPase activity and unwinds double-stranded RNA. This chain is ATP-dependent RNA helicase RhlB, found in Vibrio campbellii (strain ATCC BAA-1116).